Here is a 314-residue protein sequence, read N- to C-terminus: Methionyl-tRNA formyltransferase (314 aa).

113 to 116 (SLLP) contacts (6S)-5,6,7,8-tetrahydrofolate.

This sequence belongs to the Fmt family.

It carries out the reaction L-methionyl-tRNA(fMet) + (6R)-10-formyltetrahydrofolate = N-formyl-L-methionyl-tRNA(fMet) + (6S)-5,6,7,8-tetrahydrofolate + H(+). In terms of biological role, attaches a formyl group to the free amino group of methionyl-tRNA(fMet). The formyl group appears to play a dual role in the initiator identity of N-formylmethionyl-tRNA by promoting its recognition by IF2 and preventing the misappropriation of this tRNA by the elongation apparatus. The sequence is that of Methionyl-tRNA formyltransferase from Pseudomonas syringae pv. tomato (strain ATCC BAA-871 / DC3000).